The primary structure comprises 638 residues: Chaperone protein DnaK (638 aa).

T198 bears the Phosphothreonine; by autocatalysis mark. The tract at residues 599-638 (IYESQQAEGGAEGGPSGHHDDGIVDADYEEVKDDNTKKSA) is disordered. Residues 621–630 (IVDADYEEVK) are compositionally biased toward acidic residues.

This sequence belongs to the heat shock protein 70 family.

Acts as a chaperone. This Allorhizobium ampelinum (strain ATCC BAA-846 / DSM 112012 / S4) (Agrobacterium vitis (strain S4)) protein is Chaperone protein DnaK.